The sequence spans 604 residues: Aspartate--tRNA(Asp/Asn) ligase (604 aa).

Glutamate 175 provides a ligand contact to L-aspartate. The interval 199-202 (QMFK) is aspartate. L-aspartate is bound by residues arginine 221 and histidine 451. 221–223 (RDE) contacts ATP. Glutamate 485 serves as a coordination point for ATP. L-aspartate is bound at residue arginine 492. 537–540 (GIDR) serves as a coordination point for ATP.

It belongs to the class-II aminoacyl-tRNA synthetase family. Type 1 subfamily. In terms of assembly, homodimer.

It localises to the cytoplasm. The enzyme catalyses tRNA(Asx) + L-aspartate + ATP = L-aspartyl-tRNA(Asx) + AMP + diphosphate. Functionally, aspartyl-tRNA synthetase with relaxed tRNA specificity since it is able to aspartylate not only its cognate tRNA(Asp) but also tRNA(Asn). Reaction proceeds in two steps: L-aspartate is first activated by ATP to form Asp-AMP and then transferred to the acceptor end of tRNA(Asp/Asn). In Erythrobacter litoralis (strain HTCC2594), this protein is Aspartate--tRNA(Asp/Asn) ligase.